The following is a 499-amino-acid chain: Sensor histidine kinase PdtaS (499 aa).

Residues 4–149 (LGDLLAEHTM…PLEGAYLDCA (146 aa)) are GAF. Positions 178-289 (DGFIRLNEGG…TEVKRRDRAL (112 aa)) are PAS-like. In terms of domain architecture, Histidine kinase spans 298–493 (EIHHRVKNNL…DVVLRVPIGR (196 aa)). The residue at position 301 (H301) is a Phosphohistidine; by autocatalysis.

In terms of processing, autophosphorylated.

Its subcellular location is the cytoplasm. It catalyses the reaction ATP + protein L-histidine = ADP + protein N-phospho-L-histidine.. Member of the two-component regulatory system PdtaR/PdtaS. This two-component system plays an essential role in mycobacterial adaptation to poor nutrient conditions. Nutrient deprivation results in increasing intracellular concentrations of cyclic diguanosine monophosphate (c-di-GMP), which binds to the PdtaS sensor and promotes its autophosphorylation, leading to the activation of the signaling cascade. The phosphate group is then transferred to PdtaR. This is Sensor histidine kinase PdtaS from Mycolicibacterium smegmatis (strain ATCC 700084 / mc(2)155) (Mycobacterium smegmatis).